The sequence spans 90 residues: Small ribosomal subunit protein uS15c (90 aa).

Belongs to the universal ribosomal protein uS15 family. In terms of assembly, part of the 30S ribosomal subunit.

Its subcellular location is the plastid. The protein localises to the chloroplast. The chain is Small ribosomal subunit protein uS15c (rps15-A) from Brachypodium distachyon (Purple false brome).